The primary structure comprises 434 residues: 3-phosphoshikimate 1-carboxyvinyltransferase (434 aa).

Lys-22, Ser-23, and Arg-27 together coordinate 3-phosphoshikimate. Residue Lys-22 coordinates phosphoenolpyruvate. Residues Gly-93 and Arg-121 each contribute to the phosphoenolpyruvate site. 3-phosphoshikimate-binding residues include Ser-168, Ser-169, Gln-170, Ser-199, Asp-320, and Lys-347. Phosphoenolpyruvate is bound at residue Gln-170. Residue Asp-320 is the Proton acceptor of the active site. Arg-351, Arg-394, and Lys-419 together coordinate phosphoenolpyruvate.

Belongs to the EPSP synthase family. As to quaternary structure, monomer.

The protein localises to the cytoplasm. It catalyses the reaction 3-phosphoshikimate + phosphoenolpyruvate = 5-O-(1-carboxyvinyl)-3-phosphoshikimate + phosphate. Its pathway is metabolic intermediate biosynthesis; chorismate biosynthesis; chorismate from D-erythrose 4-phosphate and phosphoenolpyruvate: step 6/7. In terms of biological role, catalyzes the transfer of the enolpyruvyl moiety of phosphoenolpyruvate (PEP) to the 5-hydroxyl of shikimate-3-phosphate (S3P) to produce enolpyruvyl shikimate-3-phosphate and inorganic phosphate. The protein is 3-phosphoshikimate 1-carboxyvinyltransferase of Paraburkholderia phymatum (strain DSM 17167 / CIP 108236 / LMG 21445 / STM815) (Burkholderia phymatum).